The primary structure comprises 76 residues: Horsegram inhibitor 1 (76 aa).

Intrachain disulfides connect Cys16–Cys70, Cys17–Cys32, Cys20–Cys66, Cys22–Cys30, Cys40–Cys47, Cys44–Cys59, and Cys49–Cys57.

Belongs to the Bowman-Birk serine protease inhibitor family. HGI-III exists in a state of equilibrium between monomer, homodimer and trimer, with homodimer being the predominant form. The homodimer is stabilized by the non-covalent interaction between Lys-24 of one subunit and Asp-76 of the other subunit. The homodimer is more thermostable than the monomer. HGGI-I, HGGI-II and HGGI-III exist as monomers. HGGI-I, HGGI-II and HGGI-III are produced by proteolysis of the N- and C-termini of HGI-III.

Functionally, inhibitors of trypsin and chymotrypsin. HGGI-III has a higher activity than HGGI-I or HGGI-II. The sequence is that of Horsegram inhibitor 1 from Vigna unguiculata subsp. cylindrica (Horse gram).